A 127-amino-acid chain; its full sequence is Small ribosomal subunit protein eS6 (127 aa).

It belongs to the eukaryotic ribosomal protein eS6 family.

The sequence is that of Small ribosomal subunit protein eS6 from Picrophilus torridus (strain ATCC 700027 / DSM 9790 / JCM 10055 / NBRC 100828 / KAW 2/3).